Reading from the N-terminus, the 507-residue chain is Probable cytochrome P450 6a18 (507 aa).

Cysteine 451 provides a ligand contact to heme.

The protein belongs to the cytochrome P450 family. Heme serves as cofactor.

The protein localises to the endoplasmic reticulum membrane. Its subcellular location is the microsome membrane. Its function is as follows. May be involved in the metabolism of insect hormones and in the breakdown of synthetic insecticides. This Drosophila melanogaster (Fruit fly) protein is Probable cytochrome P450 6a18 (Cyp6a18).